A 122-amino-acid polypeptide reads, in one-letter code: Large ribosomal subunit protein uL14 (122 aa).

It belongs to the universal ribosomal protein uL14 family. As to quaternary structure, part of the 50S ribosomal subunit. Forms a cluster with proteins L3 and L19. In the 70S ribosome, L14 and L19 interact and together make contacts with the 16S rRNA in bridges B5 and B8.

Its function is as follows. Binds to 23S rRNA. Forms part of two intersubunit bridges in the 70S ribosome. This Bradyrhizobium diazoefficiens (strain JCM 10833 / BCRC 13528 / IAM 13628 / NBRC 14792 / USDA 110) protein is Large ribosomal subunit protein uL14.